A 174-amino-acid chain; its full sequence is MTYALFLLSVILVMGFVGFSSKPSPIYGGLVLIISGAVGCAVILNCGGGYMGLVVFLVYLGGMMVVFGYTTAMAIEEYPEAWGSGAEVLVSVLVGLVMEVGLVLWVKECDGVVVAVNFNSVGSWMIYEGEGSGLIREDPIGAGALYDYGRWLVVVTGWTLFVGVYVVIEIARGN.

6 consecutive transmembrane segments (helical) span residues 1-21, 24-44, 47-67, 86-106, 111-131, and 151-171; these read MTYALFLLSVILVMGFVGFSS, SPIYGGLVLIISGAVGCAVIL, GGGYMGLVVFLVYLGGMMVVF, AEVLVSVLVGLVMEVGLVLWV, GVVVAVNFNSVGSWMIYEGEG, and WLVVVTGWTLFVGVYVVIEIA.

It belongs to the complex I subunit 6 family. In terms of assembly, core subunit of respiratory chain NADH dehydrogenase (Complex I) which is composed of 45 different subunits.

Its subcellular location is the mitochondrion inner membrane. It catalyses the reaction a ubiquinone + NADH + 5 H(+)(in) = a ubiquinol + NAD(+) + 4 H(+)(out). Core subunit of the mitochondrial membrane respiratory chain NADH dehydrogenase (Complex I) which catalyzes electron transfer from NADH through the respiratory chain, using ubiquinone as an electron acceptor. Essential for the catalytic activity and assembly of complex I. The protein is NADH-ubiquinone oxidoreductase chain 6 (MT-ND6) of Pongo pygmaeus (Bornean orangutan).